The chain runs to 589 residues: Guanylate-binding protein 2 (589 aa).

Positions 1–309 (MASEIHMLQP…GAISSGSLPC (309 aa)) are GTPase domain (Globular). Residues 35–276 (NQPVVVVAIV…FTSYIFSYSA (242 aa)) form the GB1/RHD3-type G domain. Residues 45-52 (GLYRTGKS), 181-182 (RD), and leucine 245 each bind GTP. A Cysteine methyl ester modification is found at cysteine 586. Cysteine 586 carries the S-geranylgeranyl cysteine lipid modification. The propeptide at 587–589 (TIL) is removed in mature form.

This sequence belongs to the TRAFAC class dynamin-like GTPase superfamily. GB1/RHD3 GTPase family. GB1 subfamily. Homodimer; homodimerization occurs upon GTP-binding and is required for the association with membranous structures. Heterodimer with other family members, including GBP1, GBP3, GBP4 and GBP5. Post-translationally, isoprenylation is required for proper subcellular location. As to expression, widely expressed.

The protein localises to the cytoplasmic vesicle membrane. Its subcellular location is the golgi apparatus membrane. The protein resides in the cytoplasm. It is found in the perinuclear region. It carries out the reaction GTP + H2O = GDP + phosphate + H(+). In terms of biological role, interferon (IFN)-inducible GTPase that plays important roles in innate immunity against a diverse range of bacterial, viral and protozoan pathogens. Hydrolyzes GTP to GMP in 2 consecutive cleavage reactions, but the major reaction product is GDP. Following infection, recruited to the pathogen-containing vacuoles or vacuole-escaped bacteria and acts as a positive regulator of inflammasome assembly by promoting the release of inflammasome ligands from bacteria. Acts by promoting lysis of pathogen-containing vacuoles, releasing pathogens into the cytosol. Following pathogen release in the cytosol, promotes recruitment of proteins that mediate bacterial cytolysis: this liberates ligands that are detected by inflammasomes, such as lipopolysaccharide (LPS) that activates the non-canonical CASP4/CASP11 inflammasome or double-stranded DNA (dsDNA) that activates the AIM2 inflammasome. Confers protection to the protozoan pathogen Toxoplasma gondii. Independently of its GTPase activity, acts as an inhibitor of various viruses infectivity by inhibiting FURIN-mediated maturation of viral envelope proteins. The sequence is that of Guanylate-binding protein 2 (Gbp2) from Rattus norvegicus (Rat).